Consider the following 403-residue polypeptide: Presqualene diphosphate synthase (403 aa).

Positions 84, 87, and 88 each coordinate Mg(2+).

It belongs to the phytoene/squalene synthase family. Mg(2+) serves as cofactor.

The enzyme catalyses 2 (2E,6E)-farnesyl diphosphate = presqualene diphosphate + diphosphate. Functionally, catalyzes the biosynthesis of presqualene diphosphate (PSPP). Works in combination with SSL-2 or SSL-3 to produce respectively squalene or botryococcene. In most other species, farnesyl diphosphate (FPP) is converted into squalene in a two-step reaction by a single enzyme. This is Presqualene diphosphate synthase (SSL-1) from Botryococcus braunii (Green alga).